The chain runs to 274 residues: NH(3)-dependent NAD(+) synthetase (274 aa).

46–53 lines the ATP pocket; sequence GISGGQDS. Mg(2+) is bound at residue aspartate 52. Arginine 140 is a deamido-NAD(+) binding site. Threonine 160 lines the ATP pocket. Glutamate 165 is a binding site for Mg(2+). Deamido-NAD(+) contacts are provided by lysine 173 and aspartate 180. Positions 189 and 211 each coordinate ATP. Position 260–261 (260–261) interacts with deamido-NAD(+); it reads HK.

It belongs to the NAD synthetase family. As to quaternary structure, homodimer.

The catalysed reaction is deamido-NAD(+) + NH4(+) + ATP = AMP + diphosphate + NAD(+) + H(+). Its pathway is cofactor biosynthesis; NAD(+) biosynthesis; NAD(+) from deamido-NAD(+) (ammonia route): step 1/1. Its function is as follows. Catalyzes the ATP-dependent amidation of deamido-NAD to form NAD. Uses ammonia as a nitrogen source. This Streptococcus equi subsp. equi (strain 4047) protein is NH(3)-dependent NAD(+) synthetase.